Consider the following 105-residue polypeptide: MASRIKKGDQVIVIAGKDKGKQGEIIRIDGHRVVVSNVNIVKRHTKPNPQRSISGGLIDREAPIHVSNIQVLNPMTGKGDRVGFKILDDGCKLRIFRSTGEVIGA.

The protein belongs to the universal ribosomal protein uL24 family. As to quaternary structure, part of the 50S ribosomal subunit.

One of two assembly initiator proteins, it binds directly to the 5'-end of the 23S rRNA, where it nucleates assembly of the 50S subunit. Functionally, one of the proteins that surrounds the polypeptide exit tunnel on the outside of the subunit. The protein is Large ribosomal subunit protein uL24 of Xylella fastidiosa (strain 9a5c).